The chain runs to 204 residues: Carbon disulfide hydrolase (204 aa).

Residues Cys-35, His-88, and Cys-91 each coordinate Zn(2+).

Belongs to the beta-class carbonic anhydrase family. In terms of assembly, forms a hexadecameric catenane homooligomer, through interactions of two interlocked octameric rings. Exists as both octamers and hexadecamers in solution. Requires Zn(2+) as cofactor.

It catalyses the reaction carbon disulfide + 2 H2O = 2 hydrogen sulfide + CO2 + 2 H(+). It participates in sulfur metabolism; hydrogen sulfide biosynthesis. In terms of biological role, catalyzes the conversion of carbon disulfide into hydrogen sulfide and carbon dioxide, with carbonyl sulfide as an intermediate. Likely plays a key role in sulfur metabolism that allows Acidianus sp. A1-3 to grow on carbon disulfide as the main carbon and energy source. Does not show carbonic anhydrase activity (hydration of CO(2) to carbonate). In Acidianus sp. (strain A1-3), this protein is Carbon disulfide hydrolase.